Consider the following 207-residue polypeptide: Thiamine-phosphate synthase (207 aa).

4-amino-2-methyl-5-(diphosphooxymethyl)pyrimidine contacts are provided by residues 37–41 and Asn-69; that span reads QLREK. Positions 70 and 89 each coordinate Mg(2+). Residue Ser-108 participates in 4-amino-2-methyl-5-(diphosphooxymethyl)pyrimidine binding. 134-136 lines the 2-[(2R,5Z)-2-carboxy-4-methylthiazol-5(2H)-ylidene]ethyl phosphate pocket; that stretch reads TGS. 4-amino-2-methyl-5-(diphosphooxymethyl)pyrimidine is bound at residue Lys-137. 2-[(2R,5Z)-2-carboxy-4-methylthiazol-5(2H)-ylidene]ethyl phosphate-binding positions include Gly-165 and 185-186; that span reads IS.

Belongs to the thiamine-phosphate synthase family. Mg(2+) is required as a cofactor.

The enzyme catalyses 2-[(2R,5Z)-2-carboxy-4-methylthiazol-5(2H)-ylidene]ethyl phosphate + 4-amino-2-methyl-5-(diphosphooxymethyl)pyrimidine + 2 H(+) = thiamine phosphate + CO2 + diphosphate. It carries out the reaction 2-(2-carboxy-4-methylthiazol-5-yl)ethyl phosphate + 4-amino-2-methyl-5-(diphosphooxymethyl)pyrimidine + 2 H(+) = thiamine phosphate + CO2 + diphosphate. The catalysed reaction is 4-methyl-5-(2-phosphooxyethyl)-thiazole + 4-amino-2-methyl-5-(diphosphooxymethyl)pyrimidine + H(+) = thiamine phosphate + diphosphate. Its pathway is cofactor biosynthesis; thiamine diphosphate biosynthesis; thiamine phosphate from 4-amino-2-methyl-5-diphosphomethylpyrimidine and 4-methyl-5-(2-phosphoethyl)-thiazole: step 1/1. Functionally, condenses 4-methyl-5-(beta-hydroxyethyl)thiazole monophosphate (THZ-P) and 2-methyl-4-amino-5-hydroxymethyl pyrimidine pyrophosphate (HMP-PP) to form thiamine monophosphate (TMP). In Desulfitobacterium hafniense (strain Y51), this protein is Thiamine-phosphate synthase.